A 415-amino-acid chain; its full sequence is Serine hydroxymethyltransferase (415 aa).

(6S)-5,6,7,8-tetrahydrofolate contacts are provided by residues L121 and 125–127 (GHL). K230 is subject to N6-(pyridoxal phosphate)lysine. 355–357 (SPF) serves as a coordination point for (6S)-5,6,7,8-tetrahydrofolate.

Belongs to the SHMT family. In terms of assembly, homodimer. Requires pyridoxal 5'-phosphate as cofactor.

The protein localises to the cytoplasm. The catalysed reaction is (6R)-5,10-methylene-5,6,7,8-tetrahydrofolate + glycine + H2O = (6S)-5,6,7,8-tetrahydrofolate + L-serine. The protein operates within one-carbon metabolism; tetrahydrofolate interconversion. Its pathway is amino-acid biosynthesis; glycine biosynthesis; glycine from L-serine: step 1/1. In terms of biological role, catalyzes the reversible interconversion of serine and glycine with tetrahydrofolate (THF) serving as the one-carbon carrier. This reaction serves as the major source of one-carbon groups required for the biosynthesis of purines, thymidylate, methionine, and other important biomolecules. Also exhibits THF-independent aldolase activity toward beta-hydroxyamino acids, producing glycine and aldehydes, via a retro-aldol mechanism. The chain is Serine hydroxymethyltransferase from Lactococcus lactis subsp. cremoris (strain SK11).